The primary structure comprises 391 residues: 8-amino-7-oxononanoate synthase (391 aa).

R19 provides a ligand contact to substrate. 106-107 (GY) contacts pyridoxal 5'-phosphate. A substrate-binding site is contributed by H131. Pyridoxal 5'-phosphate is bound by residues S178, H206, and T234. K237 is modified (N6-(pyridoxal phosphate)lysine). T353 serves as a coordination point for substrate.

The protein belongs to the class-II pyridoxal-phosphate-dependent aminotransferase family. BioF subfamily. In terms of assembly, homodimer. Pyridoxal 5'-phosphate is required as a cofactor.

It carries out the reaction 6-carboxyhexanoyl-[ACP] + L-alanine + H(+) = (8S)-8-amino-7-oxononanoate + holo-[ACP] + CO2. It participates in cofactor biosynthesis; biotin biosynthesis. In terms of biological role, catalyzes the decarboxylative condensation of pimeloyl-[acyl-carrier protein] and L-alanine to produce 8-amino-7-oxononanoate (AON), [acyl-carrier protein], and carbon dioxide. The polypeptide is 8-amino-7-oxononanoate synthase (Geobacter metallireducens (strain ATCC 53774 / DSM 7210 / GS-15)).